A 506-amino-acid polypeptide reads, in one-letter code: Cysteine--tRNA ligase (506 aa).

Residue C34 coordinates Zn(2+). The 'HIGH' region signature appears at 36-46 (PTVYDFAHIGN). C230, H269, and E273 together coordinate Zn(2+). The 'KMSKS' region motif lies at 302–306 (KMSKS). An ATP-binding site is contributed by K305.

This sequence belongs to the class-I aminoacyl-tRNA synthetase family. As to quaternary structure, monomer. Zn(2+) is required as a cofactor.

The protein localises to the cytoplasm. It carries out the reaction tRNA(Cys) + L-cysteine + ATP = L-cysteinyl-tRNA(Cys) + AMP + diphosphate. The chain is Cysteine--tRNA ligase from Brucella suis (strain ATCC 23445 / NCTC 10510).